The chain runs to 243 residues: 1-(5-phosphoribosyl)-5-[(5-phosphoribosylamino)methylideneamino] imidazole-4-carboxamide isomerase (243 aa).

Residue D8 is the Proton acceptor of the active site. D129 functions as the Proton donor in the catalytic mechanism.

This sequence belongs to the HisA/HisF family.

It is found in the cytoplasm. It carries out the reaction 1-(5-phospho-beta-D-ribosyl)-5-[(5-phospho-beta-D-ribosylamino)methylideneamino]imidazole-4-carboxamide = 5-[(5-phospho-1-deoxy-D-ribulos-1-ylimino)methylamino]-1-(5-phospho-beta-D-ribosyl)imidazole-4-carboxamide. It participates in amino-acid biosynthesis; L-histidine biosynthesis; L-histidine from 5-phospho-alpha-D-ribose 1-diphosphate: step 4/9. The chain is 1-(5-phosphoribosyl)-5-[(5-phosphoribosylamino)methylideneamino] imidazole-4-carboxamide isomerase from Parvibaculum lavamentivorans (strain DS-1 / DSM 13023 / NCIMB 13966).